A 256-amino-acid chain; its full sequence is Deoxyribose-phosphate aldolase (256 aa).

Asp102 functions as the Proton donor/acceptor in the catalytic mechanism. Lys165 (schiff-base intermediate with acetaldehyde) is an active-site residue. Lys197 functions as the Proton donor/acceptor in the catalytic mechanism.

It belongs to the DeoC/FbaB aldolase family. DeoC type 2 subfamily.

Its subcellular location is the cytoplasm. It catalyses the reaction 2-deoxy-D-ribose 5-phosphate = D-glyceraldehyde 3-phosphate + acetaldehyde. It functions in the pathway carbohydrate degradation; 2-deoxy-D-ribose 1-phosphate degradation; D-glyceraldehyde 3-phosphate and acetaldehyde from 2-deoxy-alpha-D-ribose 1-phosphate: step 2/2. Catalyzes a reversible aldol reaction between acetaldehyde and D-glyceraldehyde 3-phosphate to generate 2-deoxy-D-ribose 5-phosphate. This is Deoxyribose-phosphate aldolase from Shewanella oneidensis (strain ATCC 700550 / JCM 31522 / CIP 106686 / LMG 19005 / NCIMB 14063 / MR-1).